Here is a 331-residue protein sequence, read N- to C-terminus: Tyrosine recombinase XerD (331 aa).

A Core-binding (CB) domain is found at 8 to 93 (GRDGARLESF…SMRQFYRFLY (86 aa)). Residues 114 to 318 (ALPKTMSVAD…LEERLQELVQ (205 aa)) form the Tyr recombinase domain. Active-site residues include R161 and K185. Basic and acidic residues predominate over residues 214-228 (QEKSKAAASQKKTDT). Residues 214 to 239 (QEKSKAAASQKKTDTAESPWLFPSNS) form a disordered region. Active-site residues include H270, R273, and H296. Y305 functions as the O-(3'-phospho-DNA)-tyrosine intermediate in the catalytic mechanism.

This sequence belongs to the 'phage' integrase family. XerD subfamily. In terms of assembly, forms a cyclic heterotetrameric complex composed of two molecules of XerC and two molecules of XerD.

Its subcellular location is the cytoplasm. Its function is as follows. Site-specific tyrosine recombinase, which acts by catalyzing the cutting and rejoining of the recombining DNA molecules. The XerC-XerD complex is essential to convert dimers of the bacterial chromosome into monomers to permit their segregation at cell division. It also contributes to the segregational stability of plasmids. This is Tyrosine recombinase XerD from Agrobacterium fabrum (strain C58 / ATCC 33970) (Agrobacterium tumefaciens (strain C58)).